We begin with the raw amino-acid sequence, 140 residues long: Lymphocyte antigen 6H (140 aa).

The signal sequence occupies residues 1–25; it reads MLPAAMKGLGLALLAVLLCSAPAHG. Positions 26 to 91 constitute a UPAR/Ly6 domain; it reads LWCQDCTLTT…RHFFSDYLMG (66 aa). 5 disulfides stabilise this stretch: Cys-28–Cys-52, Cys-31–Cys-40, Cys-45–Cys-73, Cys-77–Cys-104, and Cys-105–Cys-110. An N-linked (GlcNAc...) asparagine glycan is attached at Asn-36. Gly-115 is lipidated: GPI-anchor amidated glycine. The propeptide at 116–140 is removed in mature form; it reads AGHSPWALAGGLLLSLGPALLWAGP.

Interacts with CHRNA4 and CHRNA7. In terms of tissue distribution, highly expressed in brain (cerebral cortex, amygdala, hippocampus and subthalamic nucleus) and in acute human leukemic cell line MOLT-3. Also found in lower levels in testis, pancreas, small intestine and colon.

It localises to the cell membrane. Functionally, believed to act as a modulator of nicotinic acetylcholine receptors (nAChRs) activity. In vitro inhibits alpha-3:beta-4-containing nAChRs maximum response. May play a role in the intracellular trafficking of alpha-7-containing nAChRs and may inhibit their expression at the cell surface. Seems to inhibit alpha-7/CHRNA7 signaling in hippocampal neurons. In Homo sapiens (Human), this protein is Lymphocyte antigen 6H (LY6H).